Reading from the N-terminus, the 460-residue chain is uncharacterized protein (460 aa).

The protein to yeast YGL164c.

This is an uncharacterized protein from Schizosaccharomyces pombe (strain 972 / ATCC 24843) (Fission yeast).